A 159-amino-acid chain; its full sequence is Transcription elongation factor A protein-like 1 (159 aa).

Residues 1–120 (MEKACKEPEE…PQFRGDIHGR (120 aa)) form a disordered region. Positions 17-34 (KADEERPSVEPSPEKSSP) are enriched in basic and acidic residues. A compositionally biased stretch (acidic residues) spans 37 to 54 (QSSEEVSSEEEFFPDELL). 2 stretches are compositionally biased toward basic and acidic residues: residues 64–80 (SEER…DLFE) and 95–119 (HKLE…DIHG).

It belongs to the TFS-II family. TFA subfamily.

Its subcellular location is the nucleus. In terms of biological role, may be involved in transcriptional regulation. Modulates various viral and cellular promoters in a promoter context-dependent manner. Does not bind DNA directly. The protein is Transcription elongation factor A protein-like 1 of Bos taurus (Bovine).